The primary structure comprises 284 residues: Protoheme IX farnesyltransferase (284 aa).

The next 8 helical transmembrane spans lie at 13–33 (IIIG…FPFF), 35–55 (VFLF…SCIF), 87–107 (IFAS…VNIL), 108–128 (SMFL…FFLK), 133–153 (YSTF…HTAI), 162–182 (FLLF…IAIL), 224–244 (FLGY…FYWL), and 264–284 (FYYS…DFIF).

It belongs to the UbiA prenyltransferase family. Protoheme IX farnesyltransferase subfamily.

The protein resides in the cell membrane. The enzyme catalyses heme b + (2E,6E)-farnesyl diphosphate + H2O = Fe(II)-heme o + diphosphate. It participates in porphyrin-containing compound metabolism; heme O biosynthesis; heme O from protoheme: step 1/1. Functionally, converts heme B (protoheme IX) to heme O by substitution of the vinyl group on carbon 2 of heme B porphyrin ring with a hydroxyethyl farnesyl side group. The chain is Protoheme IX farnesyltransferase from Buchnera aphidicola subsp. Schizaphis graminum (strain Sg).